The following is an 835-amino-acid chain: Transcription intermediary factor 1-beta (835 aa).

Over residues 1 to 19 the composition is skewed to low complexity; sequence MAASAAAASAAAASAASGS. Positions 1 to 49 are disordered; sequence MAASAAAASAAAASAASGSPGPGEGSAGGEKRSTAPSAAASASASAAAS. N-acetylalanine is present on Ala-2. Phosphoserine occurs at positions 19 and 26. Residue Lys-31 forms a Glycyl lysine isopeptide (Lys-Gly) (interchain with G-Cter in SUMO2) linkage. Over residues 35–49 the composition is skewed to low complexity; it reads APSAAASASASAAAS. Ser-50 bears the Phosphoserine mark. An RING-type zinc finger spans residues 65–121; that stretch reads CGVCRERLRPEREPRLLPCLHSACSACLGPAAPAAANSSGDGGAAGDGTVVDCPVCK. Residues 65–376 form an RBCC domain region; that stretch reads CGVCRERLRP…LIYFQLHRAL (312 aa). A Glycyl lysine isopeptide (Lys-Gly) (interchain with G-Cter in SUMO2) cross-link involves residue Lys-127. Ser-138 is subject to Phosphoserine. Residues 148–195 form a B box-type 1; atypical zinc finger; sequence DANQCCTSCEDNAPATSYCVECSEPLCETCVEAHQRVKYTKDHTVRST. Zn(2+) contacts are provided by Cys-153, Cys-156, Cys-177, and His-181. Residue Lys-199 forms a Glycyl lysine isopeptide (Lys-Gly) (interchain with G-Cter in SUMO2) linkage. The B box-type 2 zinc-finger motif lies at 204 to 245; the sequence is ERTVYCNVHKHEPLVLFCESCDTLTCRDCQLNAHKDHQYQFL. Zn(2+) contacts are provided by Cys-209, His-212, Cys-232, and His-237. Residues 246-376 form a leucine zipper alpha helical coiled-coil region region; that stretch reads EDAVRNQRKL…LIYFQLHRAL (131 aa). Positions 247–376 are interaction with MAGEC2; it reads DAVRNQRKLL…LIYFQLHRAL (130 aa). Residues Lys-254 and Lys-261 each participate in a glycyl lysine isopeptide (Lys-Gly) (interchain with G-Cter in SUMO2) cross-link. The residue at position 266 (Lys-266) is an N6-acetyllysine. Lys-272 participates in a covalent cross-link: Glycyl lysine isopeptide (Lys-Gly) (interchain with G-Cter in SUMO2). N6-acetyllysine; alternate is present on Lys-304. Residue Lys-304 forms a Glycyl lysine isopeptide (Lys-Gly) (interchain with G-Cter in SUMO2); alternate linkage. Lys-319 participates in a covalent cross-link: Glycyl lysine isopeptide (Lys-Gly) (interchain with G-Cter in SUMO2). Residue Lys-340 is modified to N6-acetyllysine. Residue Lys-366 forms a Glycyl lysine isopeptide (Lys-Gly) (interchain with G-Cter in SUMO2) linkage. The segment at 366–370 is involved in binding PPP1CA; that stretch reads KLIYF. Lys-377 carries the N6-acetyllysine; alternate modification. Residue Lys-377 forms a Glycyl lysine isopeptide (Lys-Gly) (interchain with G-Cter in SUMO2); alternate linkage. Lys-377 is covalently cross-linked (Glycyl lysine isopeptide (Lys-Gly) (interchain with G-Cter in SUMO1); alternate). Residue Lys-407 forms a Glycyl lysine isopeptide (Lys-Gly) (interchain with G-Cter in SUMO2) linkage. Positions 411–480 are disordered; it reads ERPGTNSTGP…SRSGEGEVSG (70 aa). Ser-417 bears the Phosphoserine mark. Lys-434 participates in a covalent cross-link: Glycyl lysine isopeptide (Lys-Gly) (interchain with G-Cter in SUMO2). Positions 434 to 443 are enriched in polar residues; the sequence is KQGSGSSQPM. Phosphoserine occurs at positions 437, 439, and 453. Residue Lys-469 forms a Glycyl lysine isopeptide (Lys-Gly) (interchain with G-Cter in SUMO2); alternate linkage. Lys-469 participates in a covalent cross-link: Glycyl lysine isopeptide (Lys-Gly) (interchain with G-Cter in SUMO1); alternate. At Arg-470 the chain carries Citrulline. Residue Ser-471 is modified to Phosphoserine. The residue at position 472 (Arg-472) is a Citrulline. Phosphoserine is present on residues Ser-473, Ser-479, and Ser-489. The interval 476–513 is HP1 box; the sequence is GEVSGLMRKVPRVSLERLDLDLTADSQPPVFKVFPGST. The short motif at 481–494 is the PxVxL motif element; it reads LMRKVPRVSLERLD. Thr-498 bears the Phosphothreonine mark. Ser-501 is modified (phosphoserine). Residue Lys-507 forms a Glycyl lysine isopeptide (Lys-Gly) (interchain with G-Cter in SUMO2) linkage. Thr-541 bears the Phosphothreonine mark. A Glycyl lysine isopeptide (Lys-Gly) (interchain with G-Cter in SUMO2); alternate cross-link involves residue Lys-554. A Glycyl lysine isopeptide (Lys-Gly) (interchain with G-Cter in SUMO); alternate cross-link involves residue Lys-554. Lys-575 participates in a covalent cross-link: Glycyl lysine isopeptide (Lys-Gly) (interchain with G-Cter in SUMO2). A disordered region spans residues 584–618; the sequence is GPGAEGPRLASPSGSTSSGLEVVAPEGTSAPGGGP. Ser-594 is subject to Phosphoserine. The PHD-type zinc finger occupies 625–672; that stretch reads ATICRVCQKPGDLVMCNQCEFCFHLDCHLPALQDVPGEEWSCSLCHVL. Lys-676 is covalently cross-linked (Glycyl lysine isopeptide (Lys-Gly) (interchain with G-Cter in SUMO)). Ser-683, Ser-689, and Ser-697 each carry phosphoserine. The 105-residue stretch at 695 to 799 folds into the Bromo domain; the sequence is KLSPANQRKC…RFFETRMNEA (105 aa). Residue Lys-750 forms a Glycyl lysine isopeptide (Lys-Gly) (interchain with G-Cter in SUMO2); alternate linkage. A Glycyl lysine isopeptide (Lys-Gly) (interchain with G-Cter in SUMO1); alternate cross-link involves residue Lys-750. Lys-750 is covalently cross-linked (Glycyl lysine isopeptide (Lys-Gly) (interchain with G-Cter in SUMO); alternate). At Ser-752 the chain carries Phosphoserine. Residue Tyr-755 is modified to Phosphotyrosine. Ser-757 is modified (phosphoserine). N6-acetyllysine; alternate is present on residues Lys-770, Lys-774, and Lys-779. Residues Lys-770, Lys-774, and Lys-779 each participate in a glycyl lysine isopeptide (Lys-Gly) (interchain with G-Cter in SUMO2); alternate cross-link. Residue Lys-779 forms a Glycyl lysine isopeptide (Lys-Gly) (interchain with G-Cter in SUMO1); alternate linkage. The residue at position 784 (Ser-784) is a Phosphoserine. Residue Lys-804 forms a Glycyl lysine isopeptide (Lys-Gly) (interchain with G-Cter in SUMO2); alternate linkage. Lys-804 is covalently cross-linked (Glycyl lysine isopeptide (Lys-Gly) (interchain with G-Cter in SUMO); alternate). The disordered stretch occupies residues 815–835; sequence MSLPGAGLSSQELSGGPGDGP. A Phosphoserine; by ATM and ATR and dsDNA kinase modification is found at Ser-824.

The protein belongs to the TRIM/RBCC family. Interacts with SETX. Oligomer; the RBCC domain homotrimerizes and interacts with one molecule of KRAB to form the KRAB-KAP1 corepressor complex. Binding to a KRAB domain is an absolute requirement for silencing gene expression. Interacts with CEBPB and NR3C1. Interacts with a number of KRAB-ZFP proteins including ZNF10, ZFP53, ZFP68, ZNF382 and ZNF256. Interacts with NCOR1, NR3C1 and CHD3. Interacts with CEBPB (via the RING-type and PHD-type zinc fingers). Component of a ternary complex that includes TRIM28, a HP1 protein (CBX1, CBX3 OR CBX5), a KRAB domain-containing protein, and DNA. Interacts with CBX5 (via the PxVxL motif); the interaction occurs in interphase nuclei and competes for binding POGZ. Interacts with POGZ; the interaction competes for interaction with CBX5. Interacts with SETDB1; the interaction is enhanced by KAP1 sumoylation, stimulates SETDB1 histone methyltransferase activity and gene silencing. Interacts (via the PHD-type zinc finger) with UBE2I; the interaction is required for sumoylation and repressor activity. Component of the TRIM28/KAP1-ERBB4-MDM2 complex involved in connecting growth factor and DNA damage responses. Interacts directly with ERBB4; the interaction represses ERBB4-mediated transcription activity. Interacts with MDM2; the interaction contributes to p53/TP53 inactivation. Component of the TRIM28/KAP1-MDM2-p53/TP53; involved in regulating p53/TP53 stabilization and activity. Interacts (via the leucine zipper alpha helical coiled-coil) with E2F1 (central region); the interaction inhibits E2F1 acetylation and transcriptional activity. Interacts with PPP1CA; the interaction dephosphorylates TRIM28 at Ser-824 and forms a complex at the p21 promoter site. Interacts with PPP1CB; the interaction is weak but is increased on dephosphorylation at Ser-824. Interacts with FES/FPS. Interacts with SMARCAD1. Interacts with, and sumoylates IRF7. Interacts with MAGEC2. Part of a complex composed of TRIM28, HDAC1, HDAC2 and EHMT2. Interacts with AICDA. Interacts (via the RBCC domain) with KOX1 (via the KRAB domain), ZNF268 (via the KRAB domain) and ZNF300 (via the KRAB domain); the interactions increase KOX1, ZNF268 and ZNF300 nuclear localization activities. The large PER complex involved in the histone methylation is composed of at least PER2, CBX3, TRIM28, SUV39H1 and/or SUV39H2; CBX3 mediates the formation of the complex. Interacts with isoform 2 of ZFP90. Forms a complex with FOXP3 in the presence of isoform 2 of ZFP90. Interacts with NR4A3; the interactions potentiates NR4A3 activity on NurRE promoter. Interacts (unphosphorylated or phosphorylated form) with ZBTB1 (via BTB domain). Probably part of a corepressor complex containing ZNF304, TRIM28, SETDB1 and DNMT1. Interacts with ATRX. Forms a complex with ATRX, SETDB1 and ZNF274. Interacts with ZFP568; the interaction mediates ZFP568 transcriptional repression activity. Interacts with RRP1B. Interacts with CRY1. Interacts with ZNF263; recruited to the SIX3 promoter along with other proteins involved in chromatin modification and transcriptional corepression where it contributes to transcriptional repression. Interacts with CYREN (via XLF motif). Interacts with TRIM17; this interaction prevents TRIM28 activity. Interacts with ZNF746. Interacts with PHF13. Interacts with ZNF354C. Interacts with ZNF432; the interaction is independent of PARP1. In terms of assembly, (Microbial infection) Interacts with herpes virus 8 protein LANA1; this interaction facilitates establishment of viral latency. Post-translationally, ATM-induced phosphorylation on Ser-824 represses sumoylation leading to the de-repression of expression of a subset of genes involved in cell cycle control and apoptosis in response to genotoxic stress. Dephosphorylation by the phosphatases, PPP1CA and PP1CB forms, allows sumoylation and expression of TRIM28 target genes. In terms of processing, sumoylation/desumoylation events regulate TRIM28-mediated transcriptional repression. Sumoylation is required for interaction with CHD3 and SETDB1 and the corepressor activity. Represses and is repressed by Ser-824 phosphorylation. Enhances the TRIM28 corepressor activity, inhibiting transcriptional activity of a number of genes including GADD45A and CDKN1A/p21. Lys-554, Lys-779 and Lys-804 are the major sites of sumoylation. In response to Dox-induced DNA damage, enhanced phosphorylation on Ser-824 prevents sumoylation and allows de-repression of CDKN1A/p21. Auto-ubiquitinated; enhanced by MAGEA2 and MAGEC2. Post-translationally, citrullinated by PADI4. In terms of processing, ADP-ribosylated by SIRT6, promoting TRIM28/KAP1 interaction with CBX5, thereby contributing to the packaging of LINE-1 retrotransposon elements into transcriptionally repressive heterochromatin. As to expression, expressed in all tissues tested including spleen, thymus, prostate, testis, ovary, small intestine, colon and peripheral blood leukocytes.

Its subcellular location is the nucleus. It catalyses the reaction S-ubiquitinyl-[E2 ubiquitin-conjugating enzyme]-L-cysteine + [acceptor protein]-L-lysine = [E2 ubiquitin-conjugating enzyme]-L-cysteine + N(6)-ubiquitinyl-[acceptor protein]-L-lysine.. Its pathway is protein modification; protein sumoylation. Its function is as follows. Nuclear corepressor for KRAB domain-containing zinc finger proteins (KRAB-ZFPs). Mediates gene silencing by recruiting CHD3, a subunit of the nucleosome remodeling and deacetylation (NuRD) complex, and SETDB1 (which specifically methylates histone H3 at 'Lys-9' (H3K9me)) to the promoter regions of KRAB target genes. Enhances transcriptional repression by coordinating the increase in H3K9me, the decrease in histone H3 'Lys-9 and 'Lys-14' acetylation (H3K9ac and H3K14ac, respectively) and the disposition of HP1 proteins to silence gene expression. Recruitment of SETDB1 induces heterochromatinization. May play a role as a coactivator for CEBPB and NR3C1 in the transcriptional activation of ORM1. Also a corepressor for ERBB4. Inhibits E2F1 activity by stimulating E2F1-HDAC1 complex formation and inhibiting E2F1 acetylation. May serve as a partial backup to prevent E2F1-mediated apoptosis in the absence of RB1. Important regulator of CDKN1A/p21(CIP1). Has E3 SUMO-protein ligase activity toward itself via its PHD-type zinc finger. Also specifically sumoylates IRF7, thereby inhibiting its transactivation activity. Ubiquitinates p53/TP53 leading to its proteasomal degradation; the function is enhanced by MAGEC2 and MAGEA2, and possibly MAGEA3 and MAGEA6. Mediates the nuclear localization of KOX1, ZNF268 and ZNF300 transcription factors. In association with isoform 2 of ZFP90, is required for the transcriptional repressor activity of FOXP3 and the suppressive function of regulatory T-cells (Treg). Probably forms a corepressor complex required for activated KRAS-mediated promoter hypermethylation and transcriptional silencing of tumor suppressor genes (TSGs) or other tumor-related genes in colorectal cancer (CRC) cells. Required to maintain a transcriptionally repressive state of genes in undifferentiated embryonic stem cells (ESCs). In ESCs, in collaboration with SETDB1, is also required for H3K9me3 and silencing of endogenous and introduced retroviruses in a DNA-methylation independent-pathway. Associates at promoter regions of tumor suppressor genes (TSGs) leading to their gene silencing. The SETDB1-TRIM28-ZNF274 complex may play a role in recruiting ATRX to the 3'-exons of zinc-finger coding genes with atypical chromatin signatures to establish or maintain/protect H3K9me3 at these transcriptionally active regions. Functionally, (Microbial infection) Plays a critical role in the shutdown of lytic gene expression during the early stage of herpes virus 8 primary infection. This inhibition is mediated through interaction with herpes virus 8 protein LANA1. The sequence is that of Transcription intermediary factor 1-beta from Homo sapiens (Human).